The sequence spans 108 residues: Phosphoribosyl-ATP pyrophosphatase (108 aa).

It belongs to the PRA-PH family.

It localises to the cytoplasm. The enzyme catalyses 1-(5-phospho-beta-D-ribosyl)-ATP + H2O = 1-(5-phospho-beta-D-ribosyl)-5'-AMP + diphosphate + H(+). It participates in amino-acid biosynthesis; L-histidine biosynthesis; L-histidine from 5-phospho-alpha-D-ribose 1-diphosphate: step 2/9. In Trichlorobacter lovleyi (strain ATCC BAA-1151 / DSM 17278 / SZ) (Geobacter lovleyi), this protein is Phosphoribosyl-ATP pyrophosphatase.